A 469-amino-acid polypeptide reads, in one-letter code: 3-isopropylmalate dehydratase large subunit 1 (469 aa).

[4Fe-4S] cluster-binding residues include cysteine 344, cysteine 404, and cysteine 407.

The protein belongs to the aconitase/IPM isomerase family. LeuC type 1 subfamily. Heterodimer of LeuC and LeuD. [4Fe-4S] cluster is required as a cofactor.

The catalysed reaction is (2R,3S)-3-isopropylmalate = (2S)-2-isopropylmalate. Its pathway is amino-acid biosynthesis; L-leucine biosynthesis; L-leucine from 3-methyl-2-oxobutanoate: step 2/4. Its function is as follows. Catalyzes the isomerization between 2-isopropylmalate and 3-isopropylmalate, via the formation of 2-isopropylmaleate. The sequence is that of 3-isopropylmalate dehydratase large subunit 1 from Rubrobacter xylanophilus (strain DSM 9941 / JCM 11954 / NBRC 16129 / PRD-1).